We begin with the raw amino-acid sequence, 118 residues long: Fluoride-specific ion channel FluC 1 (118 aa).

The next 4 membrane-spanning stretches (helical) occupy residues 5-25 (FLLVGFGASLGAMLRYGISIF), 39-59 (FFINITGSFLLGFLVSTALGP), 61-81 (WQLFLGTGFMGGYTTFSTFKV), and 98-118 (YVGLTYLCGLIAAFIGIMLGV). 2 residues coordinate Na(+): glycine 71 and threonine 74.

Belongs to the fluoride channel Fluc/FEX (TC 1.A.43) family.

The protein localises to the cell membrane. It catalyses the reaction fluoride(in) = fluoride(out). With respect to regulation, na(+) is not transported, but it plays an essential structural role and its presence is essential for fluoride channel function. In terms of biological role, fluoride-specific ion channel. Important for reducing fluoride concentration in the cell, thus reducing its toxicity. This chain is Fluoride-specific ion channel FluC 1, found in Listeria innocua serovar 6a (strain ATCC BAA-680 / CLIP 11262).